Here is a 276-residue protein sequence, read N- to C-terminus: MTIFVISDSAGETASKLAAASMAQYPTVDFTLIRRTFVKDEDKLVQALEDAKKAEAMVLHTIINDHLVAIANQFFNEHQLFHFDILTPPVAEIERLTGVAPMREPGALHHLNENYFKRIEAMEFAVKYDDGKDPRGFLEADVLLLGVSRTSKTPLSLFLANKNLKVANLPLIPEAHLPKQLFEMDPKKIVGLTNDPNVLNGIRKERMRAYGLPENTSYSDIEKIRRELAFANDLYQKLGCIVIDVASLSIEETASMILNALNLEDHSYYSTETSED.

146 to 153 (GVSRTSKT) is an ADP binding site.

It belongs to the pyruvate, phosphate/water dikinase regulatory protein family. PDRP subfamily.

It catalyses the reaction N(tele)-phospho-L-histidyl/L-threonyl-[pyruvate, phosphate dikinase] + ADP = N(tele)-phospho-L-histidyl/O-phospho-L-threonyl-[pyruvate, phosphate dikinase] + AMP + H(+). The catalysed reaction is N(tele)-phospho-L-histidyl/O-phospho-L-threonyl-[pyruvate, phosphate dikinase] + phosphate + H(+) = N(tele)-phospho-L-histidyl/L-threonyl-[pyruvate, phosphate dikinase] + diphosphate. Its function is as follows. Bifunctional serine/threonine kinase and phosphorylase involved in the regulation of the pyruvate, phosphate dikinase (PPDK) by catalyzing its phosphorylation/dephosphorylation. The protein is Putative pyruvate, phosphate dikinase regulatory protein 2 of Enterococcus faecalis (strain ATCC 700802 / V583).